Here is a 331-residue protein sequence, read N- to C-terminus: Tetraacyldisaccharide 4'-kinase (331 aa).

ATP is bound at residue Thr60–Thr67.

Belongs to the LpxK family.

It catalyses the reaction a lipid A disaccharide + ATP = a lipid IVA + ADP + H(+). It participates in glycolipid biosynthesis; lipid IV(A) biosynthesis; lipid IV(A) from (3R)-3-hydroxytetradecanoyl-[acyl-carrier-protein] and UDP-N-acetyl-alpha-D-glucosamine: step 6/6. In terms of biological role, transfers the gamma-phosphate of ATP to the 4'-position of a tetraacyldisaccharide 1-phosphate intermediate (termed DS-1-P) to form tetraacyldisaccharide 1,4'-bis-phosphate (lipid IVA). The chain is Tetraacyldisaccharide 4'-kinase from Pseudomonas syringae pv. tomato (strain ATCC BAA-871 / DC3000).